The primary structure comprises 389 residues: Type 2 DNA topoisomerase 6 subunit A (389 aa).

A Topo IIA-type catalytic domain is found at 13–161 (KARLRAAEVM…MLILSKEKGK (149 aa)). Tyr107 functions as the O-(5'-phospho-DNA)-tyrosine intermediate in the catalytic mechanism. Mg(2+)-binding residues include Glu208 and Asp260.

The protein belongs to the TOP6A family. In terms of assembly, homodimer. Heterotetramer of two Top6A and two Top6B chains. The cofactor is Mg(2+).

The enzyme catalyses ATP-dependent breakage, passage and rejoining of double-stranded DNA.. Relaxes both positive and negative superturns and exhibits a strong decatenase activity. The chain is Type 2 DNA topoisomerase 6 subunit A from Aeropyrum pernix (strain ATCC 700893 / DSM 11879 / JCM 9820 / NBRC 100138 / K1).